We begin with the raw amino-acid sequence, 341 residues long: Methionine import ATP-binding protein MetN 3 (341 aa).

Positions 2–241 constitute an ABC transporter domain; that stretch reads IEFQNVTKTF…PSHETTKRFI (240 aa). 38 to 45 is an ATP binding site; the sequence is GFSGAGKS.

Belongs to the ABC transporter superfamily. Methionine importer (TC 3.A.1.24) family. As to quaternary structure, the complex is composed of two ATP-binding proteins (MetN), two transmembrane proteins (MetI) and a solute-binding protein (MetQ).

The protein localises to the cell membrane. The enzyme catalyses L-methionine(out) + ATP + H2O = L-methionine(in) + ADP + phosphate + H(+). It carries out the reaction D-methionine(out) + ATP + H2O = D-methionine(in) + ADP + phosphate + H(+). Functionally, part of the ABC transporter complex MetNIQ involved in methionine import. Responsible for energy coupling to the transport system. The polypeptide is Methionine import ATP-binding protein MetN 3 (Oceanobacillus iheyensis (strain DSM 14371 / CIP 107618 / JCM 11309 / KCTC 3954 / HTE831)).